We begin with the raw amino-acid sequence, 402 residues long: E3 ubiquitin-protein ligase MARCHF11 (402 aa).

Residues methionine 1–arginine 11 are compositionally biased toward gly residues. A disordered region spans residues methionine 1–histidine 161. Residues glutamate 21–proline 56 show a composition bias toward pro residues. Over residues glutamate 111–alanine 124 the composition is skewed to low complexity. An RING-CH-type zinc finger spans residues glutamine 162–isoleucine 222. Residues cysteine 170, cysteine 173, cysteine 186, cysteine 188, histidine 196, cysteine 199, cysteine 212, and cysteine 215 each coordinate Zn(2+). 2 consecutive transmembrane segments (helical) span residues methionine 245–serine 265 and isoleucine 278–isoleucine 298. The YXXL motif motif lies at tyrosine 371–leucine 374. The PDZ-binding signature appears at valine 399–valine 402.

As to quaternary structure, interacts (YXXL motif) with AP1M1. Interacts (via PDZ-binding motif) with LIN7A. Interacts with unidentified fucose glycoproteins.

The protein resides in the cytoplasmic vesicle membrane. It catalyses the reaction S-ubiquitinyl-[E2 ubiquitin-conjugating enzyme]-L-cysteine + [acceptor protein]-L-lysine = [E2 ubiquitin-conjugating enzyme]-L-cysteine + N(6)-ubiquitinyl-[acceptor protein]-L-lysine.. The protein operates within protein modification; protein ubiquitination. E3 ubiquitin-protein ligase that mediates polyubiquitination of CD4. E3 ubiquitin ligases accept ubiquitin from an E2 ubiquitin-conjugating enzyme in the form of a thioester and then directly transfer the ubiquitin to targeted substrates. May play a role in ubuquitin-dependent protein sorting in developmenting spermatids. The chain is E3 ubiquitin-protein ligase MARCHF11 from Homo sapiens (Human).